A 522-amino-acid polypeptide reads, in one-letter code: Amphoterin-induced protein 2 (522 aa).

The first 39 residues, Met-1 to Gly-39, serve as a signal peptide directing secretion. Residues Val-40–Arg-68 form the LRRNT domain. The Extracellular segment spans residues Val-40–Thr-398. Disulfide bonds link Cys-41-Cys-47 and Cys-45-Cys-54. Asn-58 carries an N-linked (GlcNAc...) asparagine glycan. LRR repeat units lie at residues Leu-69 to Val-90, Lys-94 to Thr-115, Asn-118 to Glu-139, Val-142 to Gly-163, Gln-166 to Gly-187, and Glu-193 to Leu-214. Asn-104 carries N-linked (GlcNAc...) asparagine glycosylation. Residues Asn-228–Asp-284 form the LRRCT domain. Disulfide bonds link Cys-232–Cys-260 and Cys-234–Cys-282. 6 N-linked (GlcNAc...) asparagine glycosylation sites follow: Asn-281, Asn-288, Asn-345, Asn-373, Asn-381, and Asn-384. Residues Gly-289 to Thr-379 form the Ig-like C2-type domain. Cys-310 and Cys-363 form a disulfide bridge. The chain crosses the membrane as a helical span at residues Ala-399 to Leu-419. The Cytoplasmic segment spans residues Thr-420–Thr-522. Positions Arg-501–Thr-522 are disordered.

This sequence belongs to the immunoglobulin superfamily. AMIGO family. Binds itself as well as AMIGO1 and AMIGO3. As to expression, highest levels in breast, ovary, cervix, and uterus. Lower levels in lung, colon, and rectum. Differentially expressed in 56% of thyroid, 57% of pancreatic and 45% of stomach cancers.

The protein localises to the cell membrane. It localises to the nucleus. Its function is as follows. Required for depolarization-dependent survival of cultured cerebellar granule neurons. May mediate homophilic as well as heterophilic cell-cell interaction with AMIGO1 or AMIGO3. May contribute to signal transduction through its intracellular domain. May be required for tumorigenesis of a subset of gastric adenocarcinomas. This chain is Amphoterin-induced protein 2, found in Homo sapiens (Human).